A 361-amino-acid chain; its full sequence is WAT1-related protein At4g01450 (361 aa).

10 helical membrane passes run 8 to 28 (WAPM…NALV), 40 to 60 (VIAT…AYFW), 76 to 96 (LFVS…LGLS), 103 to 123 (GSAF…IFGF), 132 to 152 (IGYG…LLTM), 177 to 197 (WIKG…WMLI), 209 to 229 (YSST…LSLI), 243 to 263 (LTII…TVGM), 273 to 293 (VVSS…DFLI), and 298 to 318 (IYLG…IFLW). 2 consecutive EamA domains span residues 21–142 (AGMV…GTLI) and 194–317 (WMLI…YIFL).

It belongs to the drug/metabolite transporter (DMT) superfamily. Plant drug/metabolite exporter (P-DME) (TC 2.A.7.4) family.

Its subcellular location is the membrane. In Arabidopsis thaliana (Mouse-ear cress), this protein is WAT1-related protein At4g01450.